A 132-amino-acid polypeptide reads, in one-letter code: ATP synthase epsilon chain (132 aa).

Belongs to the ATPase epsilon chain family. As to quaternary structure, F-type ATPases have 2 components, CF(1) - the catalytic core - and CF(0) - the membrane proton channel. CF(1) has five subunits: alpha(3), beta(3), gamma(1), delta(1), epsilon(1). CF(0) has three main subunits: a, b and c.

It localises to the cell membrane. Produces ATP from ADP in the presence of a proton gradient across the membrane. The protein is ATP synthase epsilon chain (atpC) of Bacillus caldotenax.